Consider the following 157-residue polypeptide: Protein Smg homolog (157 aa).

This sequence belongs to the Smg family.

In Xylella fastidiosa (strain M23), this protein is Protein Smg homolog.